The sequence spans 274 residues: Mitochondrial outer membrane protein porin 4 (274 aa).

Gly2 carries the post-translational modification N-acetylglycine. A Phosphoserine modification is found at Ser76.

The protein belongs to the eukaryotic mitochondrial porin (TC 1.B.8.1) family. Widely expressed.

The protein resides in the cell membrane. It is found in the mitochondrion outer membrane. Functionally, forms a channel through the mitochondrial outer membrane that allows diffusion of small hydrophilic molecules. The channel adopts an open conformation at low or zero membrane potential and a closed conformation at potentials above 30-40 mV. The open state has a weak anion selectivity whereas the closed state is cation-selective. Involved in plant growth and development at the vegetative and reproductive stages. Is important for leaf and pollen development and mitochondrial membrane potential steady state. May be involved in disease resistance. The polypeptide is Mitochondrial outer membrane protein porin 4 (VDAC4) (Arabidopsis thaliana (Mouse-ear cress)).